Reading from the N-terminus, the 169-residue chain is Ribosome maturation factor RimP (169 aa).

Belongs to the RimP family.

It localises to the cytoplasm. Required for maturation of 30S ribosomal subunits. This is Ribosome maturation factor RimP from Koribacter versatilis (strain Ellin345).